The following is a 336-amino-acid chain: MFLTLIAAIISFMVSAFTMPYFIKFYQLKKIGGQQMHEDVKQHLAKAGTPTMGGTVFLLVATAVSLLVSLFSIKNTQSLALISGILSIVVIYGIIGFLDDFLKIFKQINEGLTAKQKLALQLAGGLMFYFLHVSPSGISSINVFGYQLSLGIFYLFFVLFWVVGFSNAVNLTDGIDGLASISVVISLVTYGVIAYVQSQFDVLLLIGAMIGALLGFFCFNHKPAKVFMGDVGSLALGAMLAAISIALRQEWTLLIIGIVYVLETSSVMLQVSYFKYTKKKYGEGRRIFRMTPFHHHLELGGLSGKGKKWSEWQVDAFLWGVGSLASLLVLAILYVF.

10 helical membrane-spanning segments follow: residues 3–23 (LTLIAAIISFMVSAFTMPYFI), 53–73 (GGTVFLLVATAVSLLVSLFSI), 78–98 (SLALISGILSIVVIYGIIGFL), 118–138 (LALQLAGGLMFYFLHVSPSGI), 143–163 (VFGYQLSLGIFYLFFVLFWVV), 174–194 (GIDGLASISVVISLVTYGVIA), 200–220 (FDVLLLIGAMIGALLGFFCFN), 226–246 (VFMGDVGSLALGAMLAAISIA), 251–271 (WTLLIIGIVYVLETSSVMLQV), and 316–336 (AFLWGVGSLASLLVLAILYVF).

It belongs to the glycosyltransferase 4 family. MraY subfamily. The cofactor is Mg(2+).

It localises to the cell membrane. It catalyses the reaction UDP-N-acetyl-alpha-D-muramoyl-L-alanyl-gamma-D-glutamyl-L-lysyl-D-alanyl-D-alanine + di-trans,octa-cis-undecaprenyl phosphate = Mur2Ac(oyl-L-Ala-gamma-D-Glu-L-Lys-D-Ala-D-Ala)-di-trans,octa-cis-undecaprenyl diphosphate + UMP. It participates in cell wall biogenesis; peptidoglycan biosynthesis. In terms of biological role, catalyzes the initial step of the lipid cycle reactions in the biosynthesis of the cell wall peptidoglycan: transfers peptidoglycan precursor phospho-MurNAc-pentapeptide from UDP-MurNAc-pentapeptide onto the lipid carrier undecaprenyl phosphate, yielding undecaprenyl-pyrophosphoryl-MurNAc-pentapeptide, known as lipid I. This Streptococcus pyogenes serotype M3 (strain ATCC BAA-595 / MGAS315) protein is Phospho-N-acetylmuramoyl-pentapeptide-transferase.